The sequence spans 208 residues: Large ribosomal subunit protein uL3 (208 aa).

A disordered region spans residues Ser-134–Phe-153.

It belongs to the universal ribosomal protein uL3 family. Part of the 50S ribosomal subunit. Forms a cluster with proteins L14 and L19.

Functionally, one of the primary rRNA binding proteins, it binds directly near the 3'-end of the 23S rRNA, where it nucleates assembly of the 50S subunit. In Treponema pallidum (strain Nichols), this protein is Large ribosomal subunit protein uL3.